Here is a 251-residue protein sequence, read N- to C-terminus: Imidazole glycerol phosphate synthase subunit HisF (251 aa).

Active-site residues include D11 and D130.

This sequence belongs to the HisA/HisF family. Heterodimer of HisH and HisF.

The protein localises to the cytoplasm. The enzyme catalyses 5-[(5-phospho-1-deoxy-D-ribulos-1-ylimino)methylamino]-1-(5-phospho-beta-D-ribosyl)imidazole-4-carboxamide + L-glutamine = D-erythro-1-(imidazol-4-yl)glycerol 3-phosphate + 5-amino-1-(5-phospho-beta-D-ribosyl)imidazole-4-carboxamide + L-glutamate + H(+). The protein operates within amino-acid biosynthesis; L-histidine biosynthesis; L-histidine from 5-phospho-alpha-D-ribose 1-diphosphate: step 5/9. IGPS catalyzes the conversion of PRFAR and glutamine to IGP, AICAR and glutamate. The HisF subunit catalyzes the cyclization activity that produces IGP and AICAR from PRFAR using the ammonia provided by the HisH subunit. The protein is Imidazole glycerol phosphate synthase subunit HisF of Phocaeicola vulgatus (strain ATCC 8482 / DSM 1447 / JCM 5826 / CCUG 4940 / NBRC 14291 / NCTC 11154) (Bacteroides vulgatus).